The sequence spans 252 residues: NAD-dependent protein deacetylase (252 aa).

The Deacetylase sirtuin-type domain occupies 1-248 (MYLVEEAKKV…PEVISHIQSL (248 aa)). NAD(+) contacts are provided by A26, T30, F37, R38, Q102, V104, D105, and H120. Position 37 (F37) interacts with nicotinamide. Nicotinamide contacts are provided by V104 and D105. The active-site Proton acceptor is the H120. 4 residues coordinate Zn(2+): C128, C131, C153, and C155. 4 residues coordinate NAD(+): S191, S192, N216, and I234.

The protein belongs to the sirtuin family. Class U subfamily. Zn(2+) is required as a cofactor.

Its subcellular location is the cytoplasm. The enzyme catalyses N(6)-acetyl-L-lysyl-[protein] + NAD(+) + H2O = 2''-O-acetyl-ADP-D-ribose + nicotinamide + L-lysyl-[protein]. NAD-dependent protein deacetylase which modulates the activities of several enzymes which are inactive in their acetylated form. Deacetylates the N-terminal lysine residue of Alba, the major archaeal chromatin protein and that, in turn, increases Alba's DNA binding affinity, thereby repressing transcription. The chain is NAD-dependent protein deacetylase from Sulfolobus acidocaldarius (strain ATCC 33909 / DSM 639 / JCM 8929 / NBRC 15157 / NCIMB 11770).